The chain runs to 292 residues: 2-(5''-triphosphoribosyl)-3'-dephosphocoenzyme-A synthase (292 aa).

The protein belongs to the CitG/MdcB family.

It carries out the reaction 3'-dephospho-CoA + ATP = 2'-(5''-triphospho-alpha-D-ribosyl)-3'-dephospho-CoA + adenine. Catalyzes the formation of 2-(5''-triphosphoribosyl)-3'-dephosphocoenzyme-A, the precursor of the prosthetic group of the holo-acyl carrier protein (gamma chain) of citrate lyase, from ATP and dephospho-CoA. The sequence is that of 2-(5''-triphosphoribosyl)-3'-dephosphocoenzyme-A synthase from Escherichia coli O6:K15:H31 (strain 536 / UPEC).